The following is a 596-amino-acid chain: MPLPESVGDLVVLHFETNLDDHGISIGRAPCEIHEICWVILDGKTLEKQHCESCSIREDSSRHGICGSASSLTEAIFTLDNSIQERLNFQGKPFTFVVMNGRELRVLLPKEARDQGITLPSYMRHPRLFDLSSEYAKWQIRMGAVPPYTITLSHIFGKLDVDSLPPITESKAIELSPSDAPYITKGLTQCWRLANATTLLLRKAEKDSRGHSLPSVLTQPINCQADARSFYAERSKIVHVAGLTNDVTQLELESWFTNHGVHPVALWTLKTPEPYKSTGTGFVLFASHEDAADALAFNGYCLGDRMLEIIPSSTKVLDKASDILIPFPSSKNRPRPGDWNCPMCGFSNFQRRTSCFRCSFPGPTHVSAATGSNTFSPDFPYGNSYGNGSSHFIANYGGSVHHSNENTMQSDLQHQNGNNAVNHHHSSRSFGGNVPFRAGDWKCGSEGCGYHNFAKNVCCLRCGASRATAAVVADHASGPVNGSYSHNSYSHIPPVMSTSPPNHSVYPYSQLSINSVTANHGQNFGGQNGGNVSRFDDHGRFKEVSRPSVTTDQGDWLCECGFTNFRRRSNCLRCNAPHYSNMQIPASLPSDFNAYV.

Serine 176 carries the post-translational modification Phosphoserine. The region spanning 236–314 is the RRM domain; that stretch reads KIVHVAGLTN…RMLEIIPSST (79 aa). The segment at 335-364 adopts a RanBP2-type 1 zinc-finger fold; sequence RPGDWNCPMCGFSNFQRRTSCFRCSFPGPT. A Phosphoserine modification is found at serine 429. 2 consecutive RanBP2-type zinc fingers follow at residues 437-468 and 552-580; these read RAGDWKCGSEGCGYHNFAKNVCCLRCGASRAT and DQGDWLCECGFTNFRRRSNCLRCNAPHYS.

In terms of assembly, interacts with dpb4. Interacts with chp1.

The protein localises to the chromosome. It is found in the nucleus. The protein resides in the cytoplasm. It localises to the cytoplasmic granule. Mediates heterochromatin assembly by promoting RNAi-mediated heterochromatin silencing and histone deacetylation. Binds pericetromeric transcripts and recruits the RNA-induced transcriptional silencing (RITS) complex to heterochromatin. Recruits sir2 to chromatin to promote deacetylation of 'Lys-9' of histone H3. Involved in bipolar spindle assembly during mitosis. Required for proper localization of kinesin-14/Klp2 on the spindle microtubules. This chain is RNA-binding protein involved in heterochromatin assembly dri1, found in Schizosaccharomyces pombe (strain 972 / ATCC 24843) (Fission yeast).